Reading from the N-terminus, the 144-residue chain is Small ribosomal subunit protein eS17 (144 aa).

Belongs to the eukaryotic ribosomal protein eS17 family.

This Solanum lycopersicum (Tomato) protein is Small ribosomal subunit protein eS17 (RPS17).